Consider the following 381-residue polypeptide: Succinate--CoA ligase [ADP-forming] subunit beta (381 aa).

The ATP-grasp domain occupies 9-236 (KTIFADAGIP…ESYEDDLERK (228 aa)). Residues Lys45, 52–54 (GRG), Glu91, Val94, and Glu99 each bind ATP. The Mg(2+) site is built by Asn191 and Asp205. Substrate contacts are provided by residues Asn256 and 313 to 315 (GIT).

It belongs to the succinate/malate CoA ligase beta subunit family. As to quaternary structure, heterotetramer of two alpha and two beta subunits. The cofactor is Mg(2+).

It carries out the reaction succinate + ATP + CoA = succinyl-CoA + ADP + phosphate. The enzyme catalyses GTP + succinate + CoA = succinyl-CoA + GDP + phosphate. It participates in carbohydrate metabolism; tricarboxylic acid cycle; succinate from succinyl-CoA (ligase route): step 1/1. Functionally, succinyl-CoA synthetase functions in the citric acid cycle (TCA), coupling the hydrolysis of succinyl-CoA to the synthesis of either ATP or GTP and thus represents the only step of substrate-level phosphorylation in the TCA. The beta subunit provides nucleotide specificity of the enzyme and binds the substrate succinate, while the binding sites for coenzyme A and phosphate are found in the alpha subunit. The chain is Succinate--CoA ligase [ADP-forming] subunit beta from Halorubrum lacusprofundi (strain ATCC 49239 / DSM 5036 / JCM 8891 / ACAM 34).